We begin with the raw amino-acid sequence, 358 residues long: Dynein axonemal assembly factor 10 (358 aa).

WD repeat units lie at residues Glu64–Tyr106, Asn116–Val155, Glu163–Glu206, Asn208–Gly250, Ala258–Lys298, and Leu320–Val358.

Interacts with PIH1D1; the interaction associates DNAAF10 with the R2TP complex. Interacts with several dynein axonemal assembly factors.

The protein resides in the dynein axonemal particle. Key assembly factor specifically required for the stability of axonemal dynein heavy chains in cytoplasm. The chain is Dynein axonemal assembly factor 10 (dnaaf10) from Danio rerio (Zebrafish).